The primary structure comprises 568 residues: DEAD-box ATP-dependent RNA helicase 51 (568 aa).

2 stretches are compositionally biased toward basic and acidic residues: residues 1-13 (MVES…EELK) and 23-47 (KKNE…TQKK). The tract at residues 1-70 (MVESDKSSVE…EEEEKVEAME (70 aa)) is disordered. Residues 13 to 78 (KKRVRKRSRG…MEDGEDEKNI (66 aa)) adopt a coiled-coil conformation. Residues 60 to 70 (EEEEEKVEAME) are compositionally biased toward acidic residues. Residues 89 to 117 (VTFDSLDLSEQTSIAIKEMGFQYMTQIQA) carry the Q motif motif. Positions 120-295 (IQPLLEGKDV…RVSLTSPVHV (176 aa)) constitute a Helicase ATP-binding domain. ATP is bound at residue 133–140 (ARTGSGKT). A DEAD box motif is present at residues 243 to 246 (DEAD). Residues 321 to 468 (RLILLISFLK…ELEFNEKRLS (148 aa)) form the Helicase C-terminal domain. Residues 540–568 (KVRKARKQQGRNGFSPYSPYGKSTPTKEA) are disordered.

Belongs to the DEAD box helicase family. DDX18/HAS1 subfamily.

The catalysed reaction is ATP + H2O = ADP + phosphate + H(+). The protein is DEAD-box ATP-dependent RNA helicase 51 (RH51) of Arabidopsis thaliana (Mouse-ear cress).